Reading from the N-terminus, the 37-residue chain is Esculentin-2Rb (37 aa).

A disulfide bond links Cys31 and Cys37.

As to expression, expressed by the skin glands.

It localises to the secreted. Its function is as follows. Antimicrobial peptide. This Pelophylax ridibundus (Marsh frog) protein is Esculentin-2Rb.